A 163-amino-acid chain; its full sequence is Deoxyuridine 5'-triphosphate nucleotidohydrolase (163 aa).

Belongs to the dUTPase family. It depends on Mg(2+) as a cofactor.

The catalysed reaction is dUTP + H2O = dUMP + diphosphate + H(+). It participates in pyrimidine metabolism; dUMP biosynthesis; dUMP from dCTP (dUTP route): step 2/2. This enzyme is involved in nucleotide metabolism: it produces dUMP, the immediate precursor of thymidine nucleotides and it decreases the intracellular concentration of dUTP so that uracil cannot be incorporated into DNA. In Galliformes (FAdV-8), this protein is Deoxyuridine 5'-triphosphate nucleotidohydrolase.